The sequence spans 761 residues: Probable ubiquitin carboxyl-terminal hydrolase creB (761 aa).

The tract at residues 1–45 (MGSFLRSFRHNGGSTAPSVGAVPAKKEPQPPPMTPLEKRLLDMGP) is disordered. A compositionally biased stretch (basic and acidic residues) spans 36–45 (LEKRLLDMGP). In terms of domain architecture, USP spans 55–468 (YGMENYGNTC…CAYVLFYQET (414 aa)). Cys64 (nucleophile) is an active-site residue. Disordered regions lie at residues 113-146 (EAEA…DSPE) and 242-269 (PLME…KTPN). Positions 256 to 269 (SVDQSSSTGSKTPN) are enriched in polar residues. Residue His419 is the Proton acceptor of the active site. The segment at 496-761 (LKQNGFPQSP…LRKKSFSILS (266 aa)) is disordered. The span at 555 to 566 (PLSPVPPVPPIP) shows a compositional bias: pro residues. Residues 577-640 (KNDALAKREE…ASKAEEDRRL (64 aa)) adopt a coiled-coil conformation. Positions 580–649 (ALAKREEKER…LSTENGKEKQ (70 aa)) are enriched in basic and acidic residues. Positions 655–666 (RLKRGSKSLSHR) are enriched in basic residues. The segment covering 692-710 (SQSGPTSEQQQQQRQQSPP) has biased composition (low complexity). A compositionally biased stretch (pro residues) spans 712–722 (HDQPPNSPQPG). Residues 725-743 (TIREDEQVNHKDSKHERTG) are compositionally biased toward basic and acidic residues. Basic residues predominate over residues 744–761 (HGKWRSFSLRKKSFSILS).

Belongs to the peptidase C19 family. In terms of assembly, interacts with creA, creC and qutD.

The enzyme catalyses Thiol-dependent hydrolysis of ester, thioester, amide, peptide and isopeptide bonds formed by the C-terminal Gly of ubiquitin (a 76-residue protein attached to proteins as an intracellular targeting signal).. Functionally, ubiquitin thioesterase component of the regulatory network controlling carbon source utilization through ubiquitination and deubiquitination involving creA, creB, creC, creD and acrB. Deubiquitinates the creA catabolic repressor and the quinate permease qutD. Also plays a role in response to carbon starvation and the control of extracellular proteases activity. In Neosartorya fischeri (strain ATCC 1020 / DSM 3700 / CBS 544.65 / FGSC A1164 / JCM 1740 / NRRL 181 / WB 181) (Aspergillus fischerianus), this protein is Probable ubiquitin carboxyl-terminal hydrolase creB (creB).